The primary structure comprises 291 residues: Ribosomal RNA small subunit methyltransferase A (291 aa).

S-adenosyl-L-methionine-binding residues include His21, Leu23, Gly48, Glu70, Asp95, and Asn115.

It belongs to the class I-like SAM-binding methyltransferase superfamily. rRNA adenine N(6)-methyltransferase family. RsmA subfamily.

It localises to the cytoplasm. It catalyses the reaction adenosine(1518)/adenosine(1519) in 16S rRNA + 4 S-adenosyl-L-methionine = N(6)-dimethyladenosine(1518)/N(6)-dimethyladenosine(1519) in 16S rRNA + 4 S-adenosyl-L-homocysteine + 4 H(+). Specifically dimethylates two adjacent adenosines (A1518 and A1519) in the loop of a conserved hairpin near the 3'-end of 16S rRNA in the 30S particle. May play a critical role in biogenesis of 30S subunits. The sequence is that of Ribosomal RNA small subunit methyltransferase A from Prochlorococcus marinus (strain NATL1A).